The primary structure comprises 122 residues: Large ribosomal subunit protein uL14 (122 aa).

It belongs to the universal ribosomal protein uL14 family. As to quaternary structure, part of the 50S ribosomal subunit. Forms a cluster with proteins L3 and L19. In the 70S ribosome, L14 and L19 interact and together make contacts with the 16S rRNA in bridges B5 and B8.

In terms of biological role, binds to 23S rRNA. Forms part of two intersubunit bridges in the 70S ribosome. This is Large ribosomal subunit protein uL14 from Cyanothece sp. (strain PCC 7425 / ATCC 29141).